We begin with the raw amino-acid sequence, 142 residues long: Ctenidin-3 (142 aa).

The signal sequence occupies residues 1-19 (MKHLIPLIVMASVVLAVYA). Tyr139 carries the tyrosine amide modification.

In terms of tissue distribution, expressed in hemocytes (at protein level).

It localises to the secreted. Its function is as follows. Antimicrobial protein with bacteriostatic activity against the Gram-negative bacterium E.coli, and very weak activity against the Gram-positive bacterium S.aureus. Lacks activity against the yeast C.albicans. The chain is Ctenidin-3 from Cupiennius salei (American wandering spider).